The primary structure comprises 508 residues: MSRFVQDLSKAMSQDGASQFQEVIRQELELSVKKELEKILTTAPSHEFEHTKKDLDGFRKLFHRFLQEKGPSVDWGKIQRPPEDSIQPYEKIKARGLPDNISSVLNKLVVVKLNGGLGTSMGCKGPKSLIGVRNENTFLDLTVQQIEHLNKTYNTDVPLVLMNSFNTDEDTKKILQKYNHCRVKIYTFNQSRYPRINKESLLPVAKDVSYSGENTEAWYPPGHGDIYASFYNSGLLDTFIGEGKEYIFVSNIDNLGATVDLYILNHLMNPPNGRPCEFVMEATNKARADVKGGTLTQYEGKLRLVEIAQVPKPHVDEFKSVSKFKIFNTNNLWISLAAVKRLQEQNAIDMEIIVNPKTLDGGLNVIQLETAVGAAIKSFENSLGINVPRSRFLPVKTTSDLLLVMSNLYSLNAGSLTMSEKREFPTVPLVKLGSSFTKVQDYLRRFESIPDMLELDHLTVSGDVTFGKNVSLKGTVIIIXNHGDRIDIPPGAVLENKIVSGNLRILDH.

Residue serine 13 is modified to Phosphoserine. UTP is bound by residues 113-116 (LNGG), lysine 127, glutamine 190, and glycine 222. 115-116 (GG) lines the substrate pocket. Lysine 127 lines the Mg(2+) pocket. Substrate is bound by residues histidine 223 and 251–253 (NID). The UTP site is built by aspartate 253 and lysine 396. Aspartate 253 serves as a coordination point for Mg(2+). Lysine 396 is an active-site residue. Position 426 is a phosphothreonine (threonine 426). A Phosphoserine modification is found at serine 434. Lysine 438 carries the N6-acetyllysine modification. Phosphoserine is present on residues serine 448 and serine 461. Residues 457-508 (HLTVSGDVTFGKNVSLKGTVIIIXNHGDRIDIPPGAVLENKIVSGNLRILDH) are oligomerization. The interval 502–503 (NL) is critical for end-to-end subunit interaction.

It belongs to the UDPGP type 1 family. In terms of assembly, homooctamer.

It localises to the cytoplasm. The catalysed reaction is alpha-D-glucose 1-phosphate + UTP + H(+) = UDP-alpha-D-glucose + diphosphate. The protein operates within glycan biosynthesis; glycogen biosynthesis. UTP--glucose-1-phosphate uridylyltransferase catalyzing the conversion of glucose-1-phosphate into UDP-glucose, a crucial precursor for the production of glycogen. The chain is UTP--glucose-1-phosphate uridylyltransferase (UGP2) from Sus scrofa (Pig).